A 465-amino-acid chain; its full sequence is Protein hedgehog (465 aa).

Cys79 carries the N-palmitoyl cysteine lipid modification. Residues Glu143, Glu144, Asp149, Thr179, Glu180, Asp183, and Asp185 each contribute to the Ca(2+) site. Gly251 carries the Cholesterol glycine ester lipid modification.

Belongs to the hedgehog family. In terms of assembly, interacts with shf. Post-translationally, the C-terminal part of the hedgehog protein precursor displays an autoproteolysis activity that results in the cleavage of the full-length protein into two parts (N-product and C-product). In addition, the C-terminal part displays a cholesterol transferase activity that results by the covalent attachment of a cholesterol moiety to the C-terminal of the newly generated N-product. The N-product is the active species in both local and long-range signaling, whereas the C-product has no signaling activity. In terms of processing, cholesterylation is required for N-product targeting to lipid rafts and multimerization. N-palmitoylation by Rasp of the hedgehog N-product, within the secretory pathway, is required for the embryonic and larval patterning activities of the hedgehog signal.

It localises to the nucleus. The protein resides in the cytoplasm. It is found in the cell membrane. It carries out the reaction glycyl-L-cysteinyl-[protein] + cholesterol + H(+) = [protein]-C-terminal glycyl cholesterol ester + N-terminal L-cysteinyl-[protein]. In terms of biological role, the C-terminal part of the hedgehog protein precursor displays an autoproteolysis activity that results in the cleavage of the full-length protein into two parts (N-product and C-product). In addition, the C-terminal part displays a cholesterol transferase activity that results by the covalent attachment of a cholesterol moiety to the C-terminal of the newly generated N-product. Once cleaved, the C-product has no signaling activity and diffuses from the cell. Functionally, the dually lipidated hedgehog protein N-product is a morphogen which is essential for a variety of patterning events during development. Establishes the anterior-posterior axis of the embryonic segments and patterns the larval imaginal disks. Binds to the patched (ptc) receptor, which functions in association with smoothened (smo), to activate the transcription of target genes wingless (wg), decapentaplegic (dpp) and ptc. In the absence of hh, ptc represses the constitutive signaling activity of smo through fused (fu). Essential component of a signaling pathway which regulates the Duox-dependent gut immune response to bacterial uracil; required to activate Cad99C-dependent endosome formation, norpA-dependent Ca2+ mobilization and p38 MAPK, which are essential steps in the Duox-dependent production of reactive oxygen species (ROS) in response to intestinal bacterial infection. During photoreceptor differentiation, it up-regulates transcription of Ubr3, which in turn promotes the hh-signaling pathway by mediating the ubiquitination and degradation of cos. The protein is Protein hedgehog of Drosophila yakuba (Fruit fly).